The primary structure comprises 302 residues: 4-hydroxy-tetrahydrodipicolinate synthase (302 aa).

T55 contacts pyruvate. Y144 functions as the Proton donor/acceptor in the catalytic mechanism. K172 serves as the catalytic Schiff-base intermediate with substrate. Residue V214 coordinates pyruvate.

Belongs to the DapA family. As to quaternary structure, homotetramer; dimer of dimers.

The protein localises to the cytoplasm. It carries out the reaction L-aspartate 4-semialdehyde + pyruvate = (2S,4S)-4-hydroxy-2,3,4,5-tetrahydrodipicolinate + H2O + H(+). The protein operates within amino-acid biosynthesis; L-lysine biosynthesis via DAP pathway; (S)-tetrahydrodipicolinate from L-aspartate: step 3/4. Its function is as follows. Catalyzes the condensation of (S)-aspartate-beta-semialdehyde [(S)-ASA] and pyruvate to 4-hydroxy-tetrahydrodipicolinate (HTPA). In Prochlorococcus marinus (strain SARG / CCMP1375 / SS120), this protein is 4-hydroxy-tetrahydrodipicolinate synthase.